Reading from the N-terminus, the 377-residue chain is Nitric oxide reductase FlRd-NAD(+) reductase (377 aa).

Belongs to the FAD-dependent oxidoreductase family. FAD serves as cofactor.

The protein resides in the cytoplasm. It catalyses the reaction 2 reduced [nitric oxide reductase rubredoxin domain] + NAD(+) + H(+) = 2 oxidized [nitric oxide reductase rubredoxin domain] + NADH. The protein operates within nitrogen metabolism; nitric oxide reduction. Functionally, one of at least two accessory proteins for anaerobic nitric oxide (NO) reductase. Reduces the rubredoxin moiety of NO reductase. This Escherichia coli (strain SE11) protein is Nitric oxide reductase FlRd-NAD(+) reductase.